Consider the following 54-residue polypeptide: MLLLKSIRRHQDRSIVHLLRGPNLRSLSLRVWVLHPNTRIDVRLLGPCFKTGGI.

This is an uncharacterized protein from Saccharomyces cerevisiae (strain ATCC 204508 / S288c) (Baker's yeast).